A 149-amino-acid chain; its full sequence is D-aminoacyl-tRNA deacylase (149 aa).

The Gly-cisPro motif, important for rejection of L-amino acids motif lies at 137–138 (GP).

Belongs to the DTD family. In terms of assembly, homodimer.

Its subcellular location is the cytoplasm. It catalyses the reaction glycyl-tRNA(Ala) + H2O = tRNA(Ala) + glycine + H(+). The enzyme catalyses a D-aminoacyl-tRNA + H2O = a tRNA + a D-alpha-amino acid + H(+). Functionally, an aminoacyl-tRNA editing enzyme that deacylates mischarged D-aminoacyl-tRNAs. Also deacylates mischarged glycyl-tRNA(Ala), protecting cells against glycine mischarging by AlaRS. Acts via tRNA-based rather than protein-based catalysis; rejects L-amino acids rather than detecting D-amino acids in the active site. By recycling D-aminoacyl-tRNA to D-amino acids and free tRNA molecules, this enzyme counteracts the toxicity associated with the formation of D-aminoacyl-tRNA entities in vivo and helps enforce protein L-homochirality. This Desulforamulus reducens (strain ATCC BAA-1160 / DSM 100696 / MI-1) (Desulfotomaculum reducens) protein is D-aminoacyl-tRNA deacylase.